Reading from the N-terminus, the 129-residue chain is Small ribosomal subunit protein uS9 (129 aa).

The interval 108 to 129 is disordered; sequence RMVERKKYGKKKARKSFQFSKR. Residues 114-129 show a composition bias toward basic residues; the sequence is KYGKKKARKSFQFSKR.

The protein belongs to the universal ribosomal protein uS9 family.

The sequence is that of Small ribosomal subunit protein uS9 from Chlorobaculum tepidum (strain ATCC 49652 / DSM 12025 / NBRC 103806 / TLS) (Chlorobium tepidum).